The chain runs to 194 residues: Coiled-coil domain-containing protein 184 (194 aa).

Residues 39–68 are a coiled coil; the sequence is GMKELMEHLKAQLQALFEDVRAMRGALDEQ. The interval 101–176 is disordered; it reads GLGVVGGKGS…LLGGDGPLVE (76 aa). Residues 135–145 are compositionally biased toward acidic residues; it reads PEDEEEEEEEK.

The chain is Coiled-coil domain-containing protein 184 (CCDC184) from Homo sapiens (Human).